We begin with the raw amino-acid sequence, 327 residues long: MAVPAKKRKMNFSEREVEIIVEELELKKHLLVNHFNAGVPLAAKSAAWHGILRRVNAVATCRRELPEVKKKWSDLKTEVRRKVAQVRAAVEGGEAPGPTEDDGAGGPGTGSGSGGSGTAIAPVLLTPMQQRICNLLGEATIISLPSTTEIHPVALGSTATTAAATVTLTQIPTETTYHTLEEGVVEYCTAEAPPPLPTEAPVEMIAQPPDTSVKPQALKSRIALNSAKLIQEQRVTNLHIKEIAQHLEQQNGLLQMIRRSQEVQACAQERQAQAMEGTQAALSVLIQVLRPMIKDFRRYLQNNTPNPAPASAPGPVAQNGQPDSIIQ.

The required for nuclear localization and apoptosis-inducing activity stretch occupies residues 1–70; that stretch reads MAVPAKKRKM…CRRELPEVKK (70 aa). 2 disordered regions span residues 87–118 and 301–327; these read RAAVEGGEAPGPTEDDGAGGPGTGSGSGGSGT and QNNTPNPAPASAPGPVAQNGQPDSIIQ. Gly residues predominate over residues 104 to 117; that stretch reads AGGPGTGSGSGGSG. Polar residues predominate over residues 318-327; that stretch reads QNGQPDSIIQ.

The protein belongs to the NAIF1 family. Interacts with HARBI1.

The protein resides in the nucleus. In terms of biological role, induces apoptosis. This Mus musculus (Mouse) protein is Nuclear apoptosis-inducing factor 1 (Naif1).